The chain runs to 95 residues: Small ribosomal subunit protein uS19 (95 aa).

Residues 75–95 (APTRSFRGHGGKKADKRGKMK) are disordered. Positions 80–95 (FRGHGGKKADKRGKMK) are enriched in basic residues.

This sequence belongs to the universal ribosomal protein uS19 family.

Its function is as follows. Protein S19 forms a complex with S13 that binds strongly to the 16S ribosomal RNA. The polypeptide is Small ribosomal subunit protein uS19 (Roseiflexus sp. (strain RS-1)).